A 659-amino-acid chain; its full sequence is Ion-translocating oxidoreductase complex subunit C (659 aa).

4Fe-4S ferredoxin-type domains lie at 366–397 (TEMGLSEPEQSCIRCGLCVDACPAGLLPQQLY) and 407–436 (KARNHNLFDCIECGACAYVCPSNIPLVQYY). [4Fe-4S] cluster-binding residues include Cys-377, Cys-380, Cys-383, Cys-387, Cys-416, Cys-419, Cys-422, and Cys-426.

It belongs to the 4Fe4S bacterial-type ferredoxin family. RnfC subfamily. The complex is composed of six subunits: RnfA, RnfB, RnfC, RnfD, RnfE and RnfG. The cofactor is [4Fe-4S] cluster.

The protein localises to the cell inner membrane. Functionally, part of a membrane-bound complex that couples electron transfer with translocation of ions across the membrane. In Yersinia pseudotuberculosis serotype IB (strain PB1/+), this protein is Ion-translocating oxidoreductase complex subunit C.